A 388-amino-acid chain; its full sequence is Mannitol-1-phosphate 5-dehydrogenase (388 aa).

5–16 (AIQFGGGNIGRG) is a binding site for NAD(+). The active site involves Lys-213.

The protein belongs to the mannitol dehydrogenase family. As to quaternary structure, monomer.

It catalyses the reaction D-mannitol 1-phosphate + NAD(+) = beta-D-fructose 6-phosphate + NADH + H(+). Its function is as follows. Catalyzes the NAD(H)-dependent interconversion of D-fructose 6-phosphate and D-mannitol 1-phosphate in the mannitol metabolic pathway. The protein is Mannitol-1-phosphate 5-dehydrogenase (mpdA) of Aspergillus clavatus (strain ATCC 1007 / CBS 513.65 / DSM 816 / NCTC 3887 / NRRL 1 / QM 1276 / 107).